Consider the following 60-residue polypeptide: Large ribosomal subunit protein uL30 (60 aa).

Belongs to the universal ribosomal protein uL30 family. Part of the 50S ribosomal subunit.

In Staphylococcus epidermidis (strain ATCC 35984 / DSM 28319 / BCRC 17069 / CCUG 31568 / BM 3577 / RP62A), this protein is Large ribosomal subunit protein uL30.